Consider the following 563-residue polypeptide: uncharacterized protein (563 aa).

Over 1-13 the chain is Cytoplasmic; sequence MASRSCICQVSAG. The helical transmembrane segment at 14–34 threads the bilayer; the sequence is IIFLIGAALLVAGLVIVLNVF. At 35 to 528 the chain is on the lumenal side; the sequence is PNIVNNQIND…LFTPVSTVNT (494 aa). 8 N-linked (GlcNAc...) asparagine glycosylation sites follow: Asn-43, Asn-112, Asn-133, Asn-188, Asn-265, Asn-295, Asn-315, and Asn-502. A helical transmembrane segment spans residues 529–549; it reads ICWIAVGLGAGLIALSIVMVI. Topologically, residues 550 to 563 are cytoplasmic; that stretch reads VSFCCFRDEHHKTS.

It belongs to the CD36 family.

The protein localises to the membrane. This is an uncharacterized protein from Caenorhabditis elegans.